Reading from the N-terminus, the 548-residue chain is Splicing factor U2af large subunit B (548 aa).

Basic and acidic residues predominate over residues 1–82 (MADDHAAAAD…DRDRDRDKDR (82 aa)). A disordered region spans residues 1–156 (MADDHAAAAD…SKRVSGFDMA (156 aa)). The span at 83-93 (DRHHRHHRERR) shows a compositional bias: basic residues. Residues 94–120 (EHRDRSDDHDRHRSRDSERRRDHERDG) show a composition bias toward basic and acidic residues. Positions 121-149 (RRRHRSRSRSRSRGRDRRSRSRSRSKSKR) are enriched in basic residues. RRM domains are found at residues 214–297 (RRVY…RPTD), 334–412 (DRIF…RANQ), and 453–539 (QVVS…YPEN).

Belongs to the splicing factor SR family.

The protein localises to the nucleus. Its function is as follows. Necessary for the splicing of pre-mRNA. In Oryza sativa subsp. japonica (Rice), this protein is Splicing factor U2af large subunit B (U2AF65B).